The sequence spans 668 residues: Probable serine/threonine-protein kinase abkB (668 aa).

2 disordered regions span residues 88–111 (YTNI…KTTA) and 132–162 (EVEE…DDNK). The span at 91-105 (IGGTSPNRQSVPENS) shows a compositional bias: polar residues. The stretch at 131–163 (KEVEEEIIDKNERGKEQEQENKQQKEQKDDNKS) forms a coiled coil. A compositionally biased stretch (basic and acidic residues) spans 138 to 162 (IDKNERGKEQEQENKQQKEQKDDNK). Positions 314–668 (DFERLPINSA…EIPSTYHHHH (355 aa)) constitute a Protein kinase domain. Residues 320–328 (INSASLAQV) and Lys-346 contribute to the ATP site. Residue Asp-478 is the Proton acceptor of the active site.

It belongs to the protein kinase superfamily. ADCK protein kinase family.

The sequence is that of Probable serine/threonine-protein kinase abkB (abkB) from Dictyostelium discoideum (Social amoeba).